A 163-amino-acid polypeptide reads, in one-letter code: Phosphopantetheine adenylyltransferase (163 aa).

A substrate-binding site is contributed by threonine 9. ATP-binding positions include 9–10 (TF) and histidine 17. The substrate site is built by lysine 41, leucine 76, and arginine 90. ATP is bound by residues 91 to 93 (GLR), glutamate 101, and 126 to 132 (YSFISST).

This sequence belongs to the bacterial CoaD family. In terms of assembly, homohexamer. It depends on Mg(2+) as a cofactor.

The protein localises to the cytoplasm. It carries out the reaction (R)-4'-phosphopantetheine + ATP + H(+) = 3'-dephospho-CoA + diphosphate. It participates in cofactor biosynthesis; coenzyme A biosynthesis; CoA from (R)-pantothenate: step 4/5. Its function is as follows. Reversibly transfers an adenylyl group from ATP to 4'-phosphopantetheine, yielding dephospho-CoA (dPCoA) and pyrophosphate. The protein is Phosphopantetheine adenylyltransferase of Dichelobacter nodosus (strain VCS1703A).